The chain runs to 808 residues: Aminotransferase ALT4 (808 aa).

The protein belongs to the class-II pyridoxal-phosphate-dependent aminotransferase family. BioF subfamily. Requires pyridoxal 5'-phosphate as cofactor.

Its pathway is mycotoxin biosynthesis. Aminotransferase; part of the gene cluster that mediates the biosynthesis of the host-selective toxins (HSTs) AAL-toxins, sphinganine-analog mycotoxins responsible for Alternaria stem canker on tomato by the tomato pathotype. The biosynthesis starts with the polyketide synthase ALT1-catalyzed C-16 carbon chain assembly from one starter acetyl-CoA unit with malonyl-CoA extender units. ALT1 also selectively transfers methyl groups at the first and the third cycle of chain elongation for AAL toxin. The C-16 polyketide chain is released from the enzyme by a nucleophilic attack of a carbanion, which is derived from R-carbon of glycin by decarboxylation, on the carbonyl carbon of polyketide acyl chain. This step is probably catalyzed by a pyridoxal 5'-phosphate-dependent aminoacyl transferase ALT4. The respective functions of the other enzymes encoded by the cluster have still to be elucidated. The sphingosine N-acyltransferase-like protein ALT7 seems not to act as a resistance/self-tolerance factor against the toxin in the toxin biosynthetic gene cluster, contrary to what is expected. This Alternaria alternata (Alternaria rot fungus) protein is Aminotransferase ALT4.